The primary structure comprises 291 residues: uncharacterized protein (291 aa).

The tract at residues 77 to 140 (TVPQSSPTAI…PPTPVVEKSP (64 aa)) is disordered. The span at 125 to 134 (PVTPAHPPTP) shows a compositional bias: pro residues.

This is an uncharacterized protein from Synechocystis sp. (strain ATCC 27184 / PCC 6803 / Kazusa).